The sequence spans 292 residues: Formamidopyrimidine-DNA glycosylase (292 aa).

Catalysis depends on P2, which acts as the Schiff-base intermediate with DNA. E3 acts as the Proton donor in catalysis. K61 serves as the catalytic Proton donor; for beta-elimination activity. DNA is bound by residues H103, R122, and K168. An FPG-type zinc finger spans residues D254 to P288. The active-site Proton donor; for delta-elimination activity is the R278.

This sequence belongs to the FPG family. In terms of assembly, monomer. Zn(2+) is required as a cofactor.

The catalysed reaction is Hydrolysis of DNA containing ring-opened 7-methylguanine residues, releasing 2,6-diamino-4-hydroxy-5-(N-methyl)formamidopyrimidine.. It catalyses the reaction 2'-deoxyribonucleotide-(2'-deoxyribose 5'-phosphate)-2'-deoxyribonucleotide-DNA = a 3'-end 2'-deoxyribonucleotide-(2,3-dehydro-2,3-deoxyribose 5'-phosphate)-DNA + a 5'-end 5'-phospho-2'-deoxyribonucleoside-DNA + H(+). Involved in base excision repair of DNA damaged by oxidation or by mutagenic agents. Acts as a DNA glycosylase that recognizes and removes damaged bases. Has a preference for oxidized purines, such as 7,8-dihydro-8-oxoguanine (8-oxoG). Has AP (apurinic/apyrimidinic) lyase activity and introduces nicks in the DNA strand. Cleaves the DNA backbone by beta-delta elimination to generate a single-strand break at the site of the removed base with both 3'- and 5'-phosphates. The sequence is that of Formamidopyrimidine-DNA glycosylase from Mycobacterium ulcerans (strain Agy99).